Consider the following 86-residue polypeptide: Small ribosomal subunit protein bS16 (86 aa).

This sequence belongs to the bacterial ribosomal protein bS16 family.

In Methylacidiphilum infernorum (isolate V4) (Methylokorus infernorum (strain V4)), this protein is Small ribosomal subunit protein bS16.